The sequence spans 272 residues: Type III pantothenate kinase (272 aa).

6 to 13 (DVRNTHTV) provides a ligand contact to ATP. 109–112 (GADR) serves as a coordination point for substrate. The active-site Proton acceptor is Asp111. Asp131 is a K(+) binding site. Ser134 serves as a coordination point for ATP. Position 186 (Thr186) interacts with substrate.

The protein belongs to the type III pantothenate kinase family. In terms of assembly, homodimer. It depends on NH4(+) as a cofactor. K(+) is required as a cofactor.

It localises to the cytoplasm. It carries out the reaction (R)-pantothenate + ATP = (R)-4'-phosphopantothenate + ADP + H(+). It functions in the pathway cofactor biosynthesis; coenzyme A biosynthesis; CoA from (R)-pantothenate: step 1/5. Its function is as follows. Catalyzes the phosphorylation of pantothenate (Pan), the first step in CoA biosynthesis. The chain is Type III pantothenate kinase from Mycobacterium ulcerans (strain Agy99).